The chain runs to 215 residues: Peptide methionine sulfoxide reductase MsrA (215 aa).

The active site involves Cys58.

This sequence belongs to the MsrA Met sulfoxide reductase family.

It carries out the reaction L-methionyl-[protein] + [thioredoxin]-disulfide + H2O = L-methionyl-(S)-S-oxide-[protein] + [thioredoxin]-dithiol. The catalysed reaction is [thioredoxin]-disulfide + L-methionine + H2O = L-methionine (S)-S-oxide + [thioredoxin]-dithiol. In terms of biological role, has an important function as a repair enzyme for proteins that have been inactivated by oxidation. Catalyzes the reversible oxidation-reduction of methionine sulfoxide in proteins to methionine. The protein is Peptide methionine sulfoxide reductase MsrA of Pseudomonas aeruginosa (strain LESB58).